Reading from the N-terminus, the 236-residue chain is (5-formylfuran-3-yl)methyl phosphate synthase (236 aa).

The active-site Schiff-base intermediate with substrate is Lys27. The Proton acceptor role is filled by Lys85.

This sequence belongs to the MfnB family.

It catalyses the reaction 2 D-glyceraldehyde 3-phosphate = 4-(hydroxymethyl)-2-furancarboxaldehyde phosphate + phosphate + 2 H2O. The protein operates within cofactor biosynthesis; methanofuran biosynthesis. Functionally, catalyzes the formation of 4-(hydroxymethyl)-2-furancarboxaldehyde phosphate (4-HFC-P) from two molecules of glyceraldehyde-3-P (GA-3-P). The polypeptide is (5-formylfuran-3-yl)methyl phosphate synthase (Methanococcus maripaludis (strain C7 / ATCC BAA-1331)).